Reading from the N-terminus, the 219-residue chain is Deoxyribose-phosphate aldolase (219 aa).

Catalysis depends on Asp92, which acts as the Proton donor/acceptor. Lys154 serves as the catalytic Schiff-base intermediate with acetaldehyde. The active-site Proton donor/acceptor is the Lys183.

The protein belongs to the DeoC/FbaB aldolase family. DeoC type 1 subfamily.

It is found in the cytoplasm. The enzyme catalyses 2-deoxy-D-ribose 5-phosphate = D-glyceraldehyde 3-phosphate + acetaldehyde. It participates in carbohydrate degradation; 2-deoxy-D-ribose 1-phosphate degradation; D-glyceraldehyde 3-phosphate and acetaldehyde from 2-deoxy-alpha-D-ribose 1-phosphate: step 2/2. Its function is as follows. Catalyzes a reversible aldol reaction between acetaldehyde and D-glyceraldehyde 3-phosphate to generate 2-deoxy-D-ribose 5-phosphate. The polypeptide is Deoxyribose-phosphate aldolase (Dictyoglomus turgidum (strain DSM 6724 / Z-1310)).